Consider the following 556-residue polypeptide: MSSTTAGLIFLAVLVAALVVVHVPLGDYMFRVYTTDRDLAAERTIYRLIGVDARSEQTWGAYARGVLAFSSVSIIFLFVLQLVQGKLPLHLHDPATKMTPSLAWNTAVSFVTNTNWQAYSGETTQGHLVQMAGLAVQNFVSAAVGMAVAVALVRGFARRRTGELGNFWVDLVRGTLRILLPISIVGAVLLVAGGAIQNFHLHDQVVTTLGGTAQTIPGGPVASQEVIKELGTNGGGFYNANSAHPFENPTAWTNWLEIFLILVIGFSLPRTFGRMVGNPKQGYAIASVMASLYLLSTGFMLWFQLQHHGTVPSAVGAAMEGVEQRFGVPDSGVFAAATTLTSTGAVDSAHDSLTSLGGMITMFNMQLGEVAPGGTGSGLYGMLVLAVITVFVAGLMVGRTPEYLGKKINPREIKLAASYFLVTPLIVLTGTAIAMALPGERAGMANSGPHGLSEVLYAFTSAANNNGSAFAGLSANTEWYNTALGLAMAFGRFLPIVLVLALAGSLARQGSTPDSAGTLPTHRPQFVGMVAGVTLIVVALTFLPMLALGPLAEGIH.

Helical transmembrane passes span 6 to 26 (AGLI…VPLG), 65 to 85 (GVLA…LVQG), 133 to 153 (GLAV…VALV), 176 to 196 (LRIL…GGAI), 249 to 269 (PTAW…FSLP), 283 to 303 (YAIA…MLWF), 378 to 398 (GLYG…LMVG), 419 to 439 (YFLV…ALPG), 483 to 503 (ALGL…LALA), and 526 to 546 (FVGM…LPML).

This sequence belongs to the KdpA family. The system is composed of three essential subunits: KdpA, KdpB and KdpC.

The protein resides in the cell membrane. Its function is as follows. Part of the high-affinity ATP-driven potassium transport (or Kdp) system, which catalyzes the hydrolysis of ATP coupled with the electrogenic transport of potassium into the cytoplasm. This subunit binds the extracellular potassium ions and delivers the ions to the membrane domain of KdpB through an intramembrane tunnel. This Mycobacterium avium (strain 104) protein is Potassium-transporting ATPase potassium-binding subunit.